Reading from the N-terminus, the 156-residue chain is MKRSCIYPGTFDPITNGHLDVIKRAVKIFDRVIVAVAKSDSKNPMFGFDERVTMVERSVEGLKNVSVEGFDNLLVDFAKSHEINTVIRGLRAVSDFEYELQIGYANAALWSEFETVYLMPSLKNAFISSSIVRSVLRHDGDVSALVPSQIFSLLKG.

Thr-10 contributes to the substrate binding site. ATP-binding positions include 10-11 (TF) and His-18. Positions 42, 74, and 88 each coordinate substrate. Residues 89–91 (GLR), Glu-99, and 124–130 (NAFISSS) contribute to the ATP site.

Belongs to the bacterial CoaD family. Homohexamer. Requires Mg(2+) as cofactor.

It localises to the cytoplasm. It catalyses the reaction (R)-4'-phosphopantetheine + ATP + H(+) = 3'-dephospho-CoA + diphosphate. The protein operates within cofactor biosynthesis; coenzyme A biosynthesis; CoA from (R)-pantothenate: step 4/5. In terms of biological role, reversibly transfers an adenylyl group from ATP to 4'-phosphopantetheine, yielding dephospho-CoA (dPCoA) and pyrophosphate. This is Phosphopantetheine adenylyltransferase from Campylobacter curvus (strain 525.92).